We begin with the raw amino-acid sequence, 104 residues long: NADH-quinone oxidoreductase subunit K (104 aa).

3 consecutive transmembrane segments (helical) span residues 4–24 (VPASAYLTLAIILFCIGLFGA), 31–51 (VIVLVCIELMLNAANLNLVAF), and 67–87 (LFTMAVAAAEAAVGLAILIAL).

It belongs to the complex I subunit 4L family. In terms of assembly, NDH-1 is composed of 14 different subunits. Subunits NuoA, H, J, K, L, M, N constitute the membrane sector of the complex.

The protein resides in the cell membrane. The enzyme catalyses a quinone + NADH + 5 H(+)(in) = a quinol + NAD(+) + 4 H(+)(out). Its function is as follows. NDH-1 shuttles electrons from NADH, via FMN and iron-sulfur (Fe-S) centers, to quinones in the respiratory chain. The immediate electron acceptor for the enzyme in this species is believed to be a menaquinone. Couples the redox reaction to proton translocation (for every two electrons transferred, four hydrogen ions are translocated across the cytoplasmic membrane), and thus conserves the redox energy in a proton gradient. The sequence is that of NADH-quinone oxidoreductase subunit K from Bacillus cereus (strain G9842).